The chain runs to 556 residues: Cell wall integrity and stress response component 3 (556 aa).

Residues 1 to 38 (MERVWFAKLTNKGTIKIGYISFILLSLLCQSLIGLVNA) form the signal peptide. The region spanning 39 to 132 (DFNYEGCYSA…SSYMNVYVNA (94 aa)) is the WSC domain. The Extracellular portion of the chain corresponds to 39-384 (DFNYEGCYSA…QRLSGGAIAG (346 aa)). A glycan (N-linked (GlcNAc...) asparagine) is linked at Asn-84. Low complexity-rich tracts occupy residues 142 to 169 (SSSK…SSTT) and 184 to 257 (TTVS…STTS). Disordered stretches follow at residues 142–257 (SSSK…STTS) and 269–312 (TLSS…PSTS). Asn-367 and Asn-370 each carry an N-linked (GlcNAc...) asparagine glycan. A helical transmembrane segment spans residues 385–405 (IVIGVVFGVIFIILILLFLIW). At 406-556 (RRRKSHDQLD…LSSTVSHNRA (151 aa)) the chain is on the cytoplasmic side. Disordered regions lie at residues 425–444 (YSFG…SGTT) and 534–556 (LQVV…HNRA). The span at 546 to 556 (ELSSTVSHNRA) shows a compositional bias: polar residues.

The protein resides in the membrane. The polypeptide is Cell wall integrity and stress response component 3 (WSC3) (Saccharomyces cerevisiae (strain ATCC 204508 / S288c) (Baker's yeast)).